Consider the following 135-residue polypeptide: Large ribosomal subunit protein bL21 (135 aa).

Positions 85–135 (YRVKRGHRQQYTQIEIESLNANGPASSDDEEAAETSDAEPDEDPEAEPAEA) are disordered. Residues 93-107 (QQYTQIEIESLNANG) show a composition bias toward polar residues. A compositionally biased stretch (acidic residues) spans 111–135 (SDDEEAAETSDAEPDEDPEAEPAEA).

Belongs to the bacterial ribosomal protein bL21 family. In terms of assembly, part of the 50S ribosomal subunit. Contacts protein L20.

This protein binds to 23S rRNA in the presence of protein L20. The protein is Large ribosomal subunit protein bL21 of Salinibacter ruber (strain DSM 13855 / M31).